Consider the following 317-residue polypeptide: Cold tolerance protein 1 (317 aa).

The protein belongs to the CTO1 family.

Protein required for cold tolerance. Plays a role in the regulation of phosphate uptake. This is Cold tolerance protein 1 from Saccharomyces cerevisiae (strain ATCC 204508 / S288c) (Baker's yeast).